The chain runs to 171 residues: Peptide deformylase (171 aa).

Residues Cys-91 and His-133 each coordinate Fe cation. Glu-134 is a catalytic residue. Residue His-137 participates in Fe cation binding.

It belongs to the polypeptide deformylase family. Requires Fe(2+) as cofactor.

The catalysed reaction is N-terminal N-formyl-L-methionyl-[peptide] + H2O = N-terminal L-methionyl-[peptide] + formate. In terms of biological role, removes the formyl group from the N-terminal Met of newly synthesized proteins. Requires at least a dipeptide for an efficient rate of reaction. N-terminal L-methionine is a prerequisite for activity but the enzyme has broad specificity at other positions. This is Peptide deformylase from Mannheimia succiniciproducens (strain KCTC 0769BP / MBEL55E).